We begin with the raw amino-acid sequence, 119 residues long: ATP-dependent Clp protease adapter protein ClpS (119 aa).

It belongs to the ClpS family. In terms of assembly, binds to the N-terminal domain of the chaperone ClpA.

Functionally, involved in the modulation of the specificity of the ClpAP-mediated ATP-dependent protein degradation. This Marinobacter nauticus (strain ATCC 700491 / DSM 11845 / VT8) (Marinobacter aquaeolei) protein is ATP-dependent Clp protease adapter protein ClpS.